Here is a 77-residue protein sequence, read N- to C-terminus: MAVGVSPGELRELTDEELAERLRESKEELFNLRFQMATGQLNNNRRLRTVRQEIARIYTVLRERELGLATGPDGKES.

The protein belongs to the universal ribosomal protein uL29 family.

In Mycobacterium bovis (strain ATCC BAA-935 / AF2122/97), this protein is Large ribosomal subunit protein uL29 (rpmC).